The following is a 108-amino-acid chain: Universal stress protein Slr1101 (108 aa).

The protein belongs to the universal stress protein A family.

The polypeptide is Universal stress protein Slr1101 (Synechocystis sp. (strain ATCC 27184 / PCC 6803 / Kazusa)).